A 682-amino-acid polypeptide reads, in one-letter code: Potassium-transporting ATPase ATP-binding subunit (682 aa).

4 consecutive transmembrane segments (helical) span residues 34-54 (PVMF…IAMA), 62-82 (ALFS…ANFA), 219-239 (IALT…TATL), and 254-274 (VLVA…LSAI). Asp307 acts as the 4-aspartylphosphate intermediate in catalysis. ATP contacts are provided by residues Asp344, Glu348, 377 to 384 (FTAQSRMS), and Lys395. Mg(2+)-binding residues include Asp518 and Asp522. 3 helical membrane passes run 588-608 (FAII…LNIM), 616-636 (AILS…PLAL), and 656-676 (IYGL…DLLL).

Belongs to the cation transport ATPase (P-type) (TC 3.A.3) family. Type IA subfamily. The system is composed of three essential subunits: KdpA, KdpB and KdpC.

It is found in the cell inner membrane. The enzyme catalyses K(+)(out) + ATP + H2O = K(+)(in) + ADP + phosphate + H(+). Functionally, part of the high-affinity ATP-driven potassium transport (or Kdp) system, which catalyzes the hydrolysis of ATP coupled with the electrogenic transport of potassium into the cytoplasm. This subunit is responsible for energy coupling to the transport system and for the release of the potassium ions to the cytoplasm. This chain is Potassium-transporting ATPase ATP-binding subunit, found in Escherichia coli (strain K12 / MC4100 / BW2952).